The chain runs to 253 residues: HTH-type transcriptional regulator YdeO (253 aa).

An HTH araC/xylS-type domain is found at 137-233 (GKVRNIVNMK…GNSPKRVSKE (97 aa)). DNA-binding regions (H-T-H motif) lie at residues 154 to 175 (KDIC…KQEQ) and 200 to 223 (VNKI…RKHF).

Functionally, induces the expression of gadE and mdtEF. Could also regulate the expression of other genes involved in acid resistance. The sequence is that of HTH-type transcriptional regulator YdeO (ydeO) from Escherichia coli (strain K12).